Reading from the N-terminus, the 130-residue chain is Protachykinin-1 (130 aa).

Residues 1–19 (MKILVAVAVFFLVSTQLSA) form the signal peptide. A propeptide spanning residues 20–56 (EEIGANDDLNYWSDWSDSDQIKEALPEPFEHILQRIA) is cleaved from the precursor. 2 positions are modified to methionine amide: methionine 68 and methionine 107.

The protein belongs to the tachykinin family. Post-translationally, the substance P form is cleaved at Pro-59 by the prolyl endopeptidase FAP (seprase) activity (in vitro). Substance P is also cleaved and degraded by Angiotensin-converting enzyme (ACE) and neprilysin (MME).

The protein resides in the secreted. Tachykinins are active peptides which excite neurons, evoke behavioral responses, are potent vasodilators and secretagogues, and contract (directly or indirectly) many smooth muscles. This chain is Protachykinin-1 (TAC1), found in Mesocricetus auratus (Golden hamster).